The following is a 145-amino-acid chain: Large ribosomal subunit protein bL9 (145 aa).

Belongs to the bacterial ribosomal protein bL9 family.

Its function is as follows. Binds to the 23S rRNA. This is Large ribosomal subunit protein bL9 from Mesomycoplasma hyopneumoniae (strain J / ATCC 25934 / NCTC 10110) (Mycoplasma hyopneumoniae).